A 308-amino-acid chain; its full sequence is Cell division protein ZipA (308 aa).

The Periplasmic portion of the chain corresponds to 1 to 5 (MQELR). The chain crosses the membrane as a helical span at residues 6-26 (LVLILVGALAIAALLFHGLWT). Over 27 to 308 (SRKETSSKFG…YKQRVKVFCN (282 aa)) the chain is Cytoplasmic. Residues 43–90 (FDSESEDEQPTPARGFEQPKESVVDVRQERKEPAFGRDEPNLSQDPLF) are disordered. Positions 59-82 (EQPKESVVDVRQERKEPAFGRDEP) are enriched in basic and acidic residues.

The protein belongs to the ZipA family. As to quaternary structure, interacts with FtsZ via their C-terminal domains.

It is found in the cell inner membrane. Functionally, essential cell division protein that stabilizes the FtsZ protofilaments by cross-linking them and that serves as a cytoplasmic membrane anchor for the Z ring. Also required for the recruitment to the septal ring of downstream cell division proteins. In Aliivibrio salmonicida (strain LFI1238) (Vibrio salmonicida (strain LFI1238)), this protein is Cell division protein ZipA.